The chain runs to 488 residues: ATP synthase subunit beta (488 aa).

164 to 171 (GGAGVGKT) serves as a coordination point for ATP.

The protein belongs to the ATPase alpha/beta chains family. As to quaternary structure, F-type ATPases have 2 components, CF(1) - the catalytic core - and CF(0) - the membrane proton channel. CF(1) has five subunits: alpha(3), beta(3), gamma(1), delta(1), epsilon(1). CF(0) has four main subunits: a(1), b(1), b'(1) and c(9-12).

The protein resides in the cellular thylakoid membrane. It carries out the reaction ATP + H2O + 4 H(+)(in) = ADP + phosphate + 5 H(+)(out). Its function is as follows. Produces ATP from ADP in the presence of a proton gradient across the membrane. The catalytic sites are hosted primarily by the beta subunits. In Prochlorococcus marinus (strain MIT 9313), this protein is ATP synthase subunit beta.